We begin with the raw amino-acid sequence, 33 residues long: Photosystem II reaction center protein Psb30 (33 aa).

Residues 5–25 (VIAQLTVLALIVASGPLVIAL) form a helical membrane-spanning segment.

Belongs to the Psb30/Ycf12 family. In terms of assembly, PSII is composed of 1 copy each of membrane proteins PsbA, PsbB, PsbC, PsbD, PsbE, PsbF, PsbH, PsbI, PsbJ, PsbK, PsbL, PsbM, PsbT, PsbX, PsbY, PsbZ, Psb30/Ycf12, peripheral proteins of the oxygen-evolving complex and a large number of cofactors. It forms dimeric complexes.

The protein resides in the plastid. Its subcellular location is the chloroplast thylakoid membrane. Functionally, a core subunit of photosystem II (PSII), probably helps stabilize the reaction center. The chain is Photosystem II reaction center protein Psb30 from Marchantia polymorpha (Common liverwort).